We begin with the raw amino-acid sequence, 212 residues long: MKPYTQTTGLVAPLDRANVDTDQIIPKQFLKSIKRTGFGPNLFDEWRYLDVGQPGQNNSKRPLNPDFVLNQPRYQGASVLLARENFGCGSSREHAPWALDEYGFRTVIAPSYADIFFNNSFKNGLLPIILPEAEVDELFRQVEANEGYQLSIDLAAQTVTRPDGKVLGFEVDPFRKHCLLNGLDDIGLTLQDADAIRAFEDGYRQQQPWLFR.

The protein belongs to the LeuD family. LeuD type 1 subfamily. In terms of assembly, heterodimer of LeuC and LeuD.

The enzyme catalyses (2R,3S)-3-isopropylmalate = (2S)-2-isopropylmalate. Its pathway is amino-acid biosynthesis; L-leucine biosynthesis; L-leucine from 3-methyl-2-oxobutanoate: step 2/4. Catalyzes the isomerization between 2-isopropylmalate and 3-isopropylmalate, via the formation of 2-isopropylmaleate. The protein is 3-isopropylmalate dehydratase small subunit of Pseudomonas aeruginosa (strain UCBPP-PA14).